The primary structure comprises 58 residues: Sperm protamine P1 (58 aa).

Residues 1 to 58 are disordered; it reads MARYRRRSRSRSRSRYGRRRRRSRSRRRRSRRRRRRRGRRGRGYHRRSPHRRRRRRRR.

This sequence belongs to the protamine P1 family. Testis.

It is found in the nucleus. Its subcellular location is the chromosome. Its function is as follows. Protamines substitute for histones in the chromatin of sperm during the haploid phase of spermatogenesis. They compact sperm DNA into a highly condensed, stable and inactive complex. The polypeptide is Sperm protamine P1 (PRM1) (Monodelphis domestica (Gray short-tailed opossum)).